A 114-amino-acid polypeptide reads, in one-letter code: Large ribosomal subunit protein uL22 (114 aa).

It belongs to the universal ribosomal protein uL22 family. Part of the 50S ribosomal subunit.

In terms of biological role, this protein binds specifically to 23S rRNA; its binding is stimulated by other ribosomal proteins, e.g. L4, L17, and L20. It is important during the early stages of 50S assembly. It makes multiple contacts with different domains of the 23S rRNA in the assembled 50S subunit and ribosome. The globular domain of the protein is located near the polypeptide exit tunnel on the outside of the subunit, while an extended beta-hairpin is found that lines the wall of the exit tunnel in the center of the 70S ribosome. This chain is Large ribosomal subunit protein uL22, found in Streptococcus pneumoniae (strain Taiwan19F-14).